Consider the following 368-residue polypeptide: Epoxyqueuosine reductase QueH (368 aa).

Residues C6, C7, C87, and C90 each contribute to the [4Fe-4S] cluster site. C174 and C176 are disulfide-bonded.

It belongs to the QueH family.

It carries out the reaction epoxyqueuosine(34) in tRNA + AH2 = queuosine(34) in tRNA + A + H2O. Its pathway is tRNA modification; tRNA-queuosine biosynthesis. In terms of biological role, catalyzes the conversion of epoxyqueuosine (oQ) to queuosine (Q), which is a hypermodified base found in the wobble positions of tRNA(Asp), tRNA(Asn), tRNA(His) and tRNA(Tyr). This Helicobacter pylori (strain ATCC 700392 / 26695) (Campylobacter pylori) protein is Epoxyqueuosine reductase QueH.